The sequence spans 132 residues: Pro-MCH 1 (132 aa).

The first 24 residues, 1–24 (MRHSVLSISFAVALFLECYTPSTA), serve as a signal peptide directing secretion. Cys120 and Cys129 are disulfide-bonded.

It belongs to the melanin-concentrating hormone family. In terms of tissue distribution, pituitary gland. Produced in neurons of lateral basal hypothalamus which project both to the brain and to the neural lobe of the pituitary gland from where MCH is released.

Plays a role in skin pigmentation by antagonizing the action of melanotropin alpha. Induces melanin concentration within the melanophores. May participate in the control of the hypothalamo-pituitary adrenal gland axis by inhibiting the release of ACTH. This is Pro-MCH 1 (mch1) from Oncorhynchus mykiss (Rainbow trout).